Reading from the N-terminus, the 570-residue chain is Urease subunit alpha (570 aa).

Residues 131–570 (GGFDSHIHFI…LPMAQRYFMY (440 aa)) form the Urease domain. Ni(2+)-binding residues include H136, H138, and K219. K219 carries the N6-carboxylysine modification. H221 is a binding site for substrate. The Ni(2+) site is built by H248 and H274. H322 functions as the Proton donor in the catalytic mechanism. Position 362 (D362) interacts with Ni(2+).

This sequence belongs to the metallo-dependent hydrolases superfamily. Urease alpha subunit family. In terms of assembly, heterotrimer of UreA (gamma), UreB (beta) and UreC (alpha) subunits. Three heterotrimers associate to form the active enzyme. Ni cation serves as cofactor. Carboxylation allows a single lysine to coordinate two nickel ions.

The protein resides in the cytoplasm. The catalysed reaction is urea + 2 H2O + H(+) = hydrogencarbonate + 2 NH4(+). It functions in the pathway nitrogen metabolism; urea degradation; CO(2) and NH(3) from urea (urease route): step 1/1. The polypeptide is Urease subunit alpha (Rhodopseudomonas palustris (strain BisB18)).